Here is a 239-residue protein sequence, read N- to C-terminus: 4-hydroxy-tetrahydrodipicolinate reductase (239 aa).

Residues 12–17 (GASGRM), 94–96 (GTT), and 118–121 (ASNF) each bind NAD(+). The active-site Proton donor/acceptor is the His150. Residue His151 participates in (S)-2,3,4,5-tetrahydrodipicolinate binding. Residue Lys154 is the Proton donor of the active site. Residue 160-161 (GT) participates in (S)-2,3,4,5-tetrahydrodipicolinate binding.

It belongs to the DapB family.

It localises to the cytoplasm. The enzyme catalyses (S)-2,3,4,5-tetrahydrodipicolinate + NAD(+) + H2O = (2S,4S)-4-hydroxy-2,3,4,5-tetrahydrodipicolinate + NADH + H(+). It carries out the reaction (S)-2,3,4,5-tetrahydrodipicolinate + NADP(+) + H2O = (2S,4S)-4-hydroxy-2,3,4,5-tetrahydrodipicolinate + NADPH + H(+). It participates in amino-acid biosynthesis; L-lysine biosynthesis via DAP pathway; (S)-tetrahydrodipicolinate from L-aspartate: step 4/4. Its function is as follows. Catalyzes the conversion of 4-hydroxy-tetrahydrodipicolinate (HTPA) to tetrahydrodipicolinate. The protein is 4-hydroxy-tetrahydrodipicolinate reductase of Stenotrophomonas maltophilia (strain K279a).